Consider the following 141-residue polypeptide: Cystatin (141 aa).

The signal sequence occupies residues 1 to 26; that stretch reads MVRSQLPVAAPLRLLCALLLLPSATM. One can recognise a Cystatin domain in the interval 29-129; that stretch reads GGLSPRSVTD…CHFQVWSRPW (101 aa). The Secondary area of contact motif lies at 73–77; that stretch reads QVVSG. Intrachain disulfides connect Cys-91/Cys-107 and Cys-120/Cys-140.

This sequence belongs to the cystatin family. Expressed at a low level by the venom gland (at protein level).

Its subcellular location is the secreted. In terms of biological role, inhibits various C1 cysteine proteases including cathepsin L, papain and cathepsin B. This protein has no toxic activity and its function in the venom is unknown. It may play a role as a housekeeping or regulatory protein. The protein is Cystatin of Micropechis ikaheca (New Guinean small-eyed snake).